A 140-amino-acid polypeptide reads, in one-letter code: RxLR effector protein CRE9 (140 aa).

A signal peptide spans 1-24; that stretch reads MRTSVFVALVVATFVATCISFTSA. The RxLR-dEER signature appears at 43-61; it reads RTLAEADDWWLASTNTEER. Residues 119–139 form a helical membrane-spanning segment; it reads LKILYGALLAGLIIVGVEAML.

It belongs to the RxLR effector family.

It is found in the secreted. Its subcellular location is the host cell. The protein localises to the membrane. Functionally, effector that is involved in host plant infection. Contributes to virulence during the early infection stage, by inhibiting plant defense responses induced by both PAMP-triggered immunity (PTI) and effector-triggered immunity (ETI). The sequence is that of RxLR effector protein CRE9 from Phytophthora infestans (strain T30-4) (Potato late blight agent).